The chain runs to 512 residues: Polyamine aminopropyltransferase (512 aa).

7 helical membrane-spanning segments follow: residues 19 to 39, 48 to 68, 76 to 96, 108 to 128, 151 to 171, 172 to 192, and 199 to 219; these read IVSICGIIFEVLFGALGSYIL, LTISLFLTGMGIGASLSEKFM, VWIEFCVALIGGFSSFIMFGI, YLYSITLIIGALTGVELPILI, AGGLIGGVLFVFLFRPYFGMV, KTAFLVGLINLTVALIVLWLF, and FIVHAVIGGVIGVLLIAGLFF. A PABS domain is found at 215 to 450; sequence AGLFFGEEMA…GNWGFVMASR (236 aa). Residues 217 to 457 form a spermidine synthase region; that stretch reads LFFGEEMAFN…ASREEIDLDI (241 aa). Glutamine 245 contributes to the S-methyl-5'-thioadenosine binding site. 2 residues coordinate spermidine: histidine 275 and aspartate 299. S-methyl-5'-thioadenosine-binding positions include aspartate 319 and 353–354; that span reads DA. Aspartate 371 serves as the catalytic Proton acceptor.

Belongs to the spermidine/spermine synthase family. In terms of assembly, homodimer or homotetramer.

It localises to the cell membrane. The catalysed reaction is S-adenosyl 3-(methylsulfanyl)propylamine + putrescine = S-methyl-5'-thioadenosine + spermidine + H(+). It functions in the pathway amine and polyamine biosynthesis; spermidine biosynthesis; spermidine from putrescine: step 1/1. Catalyzes the irreversible transfer of a propylamine group from the amino donor S-adenosylmethioninamine (decarboxy-AdoMet) to putrescine (1,4-diaminobutane) to yield spermidine. In Oceanobacillus iheyensis (strain DSM 14371 / CIP 107618 / JCM 11309 / KCTC 3954 / HTE831), this protein is Polyamine aminopropyltransferase.